The sequence spans 257 residues: Caspase-14 (257 aa).

Active-site residues include histidine 93 and cysteine 136. Residues 156-167 (DEELGGDEVAVL) constitute a propeptide that is removed on maturation.

This sequence belongs to the peptidase C14A family. As to quaternary structure, heterodimer of a large and a small subunit, both processed from the precursor; the mature active form is a p17/p10 dimer and the intermediate form a p20/p8 dimer. Post-translationally, maturation by proteolytic processing appears to be a two-step process. The precursor is processed by KLK7 to yield the p20/p8 intermediate form which acts the precursor to yield the p17/p10 mature form. Initially it was reported that cleavage by granzyme B, caspase-8 and -10 generates the two active subunits, however the physiological relevance has not been established. Embryo, adult liver and less in adult brain and kidney. Expressed in differentiating keratinocytes of embryonic skin (at protein level). Expressed in keratinocytes of adult skin suprabasal layers (at protein level).

The protein resides in the cytoplasm. It is found in the nucleus. Its function is as follows. Non-apoptotic caspase which is involved in epidermal differentiation. Seems to play a role in keratinocyte differentiation and is required for cornification. Regulates maturation of the epidermis by proteolytically processing filaggrin. In vitro is equally active on the synthetic caspase substrates WEHD-ACF and IETD-AFC. Involved in processing of prosaposin in the epidermis. May be involved in retinal pigment epithelium cell barrier function. The chain is Caspase-14 (Casp14) from Mus musculus (Mouse).